Here is a 511-residue protein sequence, read N- to C-terminus: Xylose import ATP-binding protein XylG (511 aa).

2 consecutive ABC transporter domains span residues 6–244 and 261–506; these read LEMR…VGRE and FEAR…IGKP. Residue 38 to 45 coordinates ATP; that stretch reads GENGAGKS.

The protein belongs to the ABC transporter superfamily. Xylose importer (TC 3.A.1.2.4) family. In terms of assembly, the complex is composed of two ATP-binding proteins (XylG), two transmembrane proteins (XylH) and a solute-binding protein (XylF).

It localises to the cell inner membrane. The enzyme catalyses D-xylose(out) + ATP + H2O = D-xylose(in) + ADP + phosphate + H(+). Its function is as follows. Part of the ABC transporter complex XylFGH involved in xylose import. Responsible for energy coupling to the transport system. The sequence is that of Xylose import ATP-binding protein XylG from Brucella abortus (strain 2308).